The chain runs to 476 residues: 23S rRNA (uracil(1939)-C(5))-methyltransferase RlmD (476 aa).

The TRAM domain maps to 1–55; sequence MVDEVLKIESLDLEARGIARRDGKVVFVEGALPGERVYAATVRRKPSYEIARVET. 4 residues coordinate [4Fe-4S] cluster: Cys-68, Cys-74, Cys-77, and Cys-156. Residues Gln-265, Phe-294, Asn-299, Glu-315, Asn-343, and Asp-364 each contribute to the S-adenosyl-L-methionine site. Cys-394 acts as the Nucleophile in catalysis.

The protein belongs to the class I-like SAM-binding methyltransferase superfamily. RNA M5U methyltransferase family. RlmD subfamily.

It catalyses the reaction uridine(1939) in 23S rRNA + S-adenosyl-L-methionine = 5-methyluridine(1939) in 23S rRNA + S-adenosyl-L-homocysteine + H(+). Functionally, catalyzes the formation of 5-methyl-uridine at position 1939 (m5U1939) in 23S rRNA. This Bordetella avium (strain 197N) protein is 23S rRNA (uracil(1939)-C(5))-methyltransferase RlmD.